The sequence spans 359 residues: Phosphoserine aminotransferase (359 aa).

Residue arginine 42 coordinates L-glutamate. Residues 76–77 (AS), tryptophan 102, threonine 151, aspartate 170, and glutamine 193 each bind pyridoxal 5'-phosphate. Residue lysine 194 is modified to N6-(pyridoxal phosphate)lysine. Residue 235 to 236 (NT) participates in pyridoxal 5'-phosphate binding.

The protein belongs to the class-V pyridoxal-phosphate-dependent aminotransferase family. SerC subfamily. Homodimer. Requires pyridoxal 5'-phosphate as cofactor.

The protein resides in the cytoplasm. The enzyme catalyses O-phospho-L-serine + 2-oxoglutarate = 3-phosphooxypyruvate + L-glutamate. It catalyses the reaction 4-(phosphooxy)-L-threonine + 2-oxoglutarate = (R)-3-hydroxy-2-oxo-4-phosphooxybutanoate + L-glutamate. The protein operates within amino-acid biosynthesis; L-serine biosynthesis; L-serine from 3-phospho-D-glycerate: step 2/3. Its pathway is cofactor biosynthesis; pyridoxine 5'-phosphate biosynthesis; pyridoxine 5'-phosphate from D-erythrose 4-phosphate: step 3/5. Catalyzes the reversible conversion of 3-phosphohydroxypyruvate to phosphoserine and of 3-hydroxy-2-oxo-4-phosphonooxybutanoate to phosphohydroxythreonine. The sequence is that of Phosphoserine aminotransferase (serC) from Bacillus subtilis (strain 168).